The following is a 200-amino-acid chain: Small ribosomal subunit protein uS4 (200 aa).

Residues 22-43 are disordered; it reads TGKELERRPYAPGQHGPTQRKK. The S4 RNA-binding domain maps to 92–170; it reads QRLDNIVYRL…VPEYVTFDAE (79 aa).

The protein belongs to the universal ribosomal protein uS4 family. As to quaternary structure, part of the 30S ribosomal subunit. Contacts protein S5. The interaction surface between S4 and S5 is involved in control of translational fidelity.

Its function is as follows. One of the primary rRNA binding proteins, it binds directly to 16S rRNA where it nucleates assembly of the body of the 30S subunit. Functionally, with S5 and S12 plays an important role in translational accuracy. In Listeria monocytogenes serovar 1/2a (strain ATCC BAA-679 / EGD-e), this protein is Small ribosomal subunit protein uS4.